The sequence spans 553 residues: Putative transport protein AHA_3492 (553 aa).

A run of 5 helical transmembrane segments spans residues 4 to 24 (IALS…LGNW), 29 to 49 (VGLG…FAGL), 65 to 85 (FGLI…FFSS), 95 to 115 (GFAA…HQLF), and 158 to 178 (MGYA…MWLI). RCK C-terminal domains lie at 191 to 276 (AQFE…VLGE) and 279 to 361 (ETSL…VVGN). Helical transmembrane passes span 371–391 (MLPV…PFYL), 403–425 (AGGP…LYWF), 439–459 (IVLF…DTLI), 465–485 (AWMM…GVLA), 493–513 (YLTL…LAFA), and 533–553 (LVMF…WAGA).

It belongs to the AAE transporter (TC 2.A.81) family. YidE subfamily.

The protein localises to the cell membrane. The chain is Putative transport protein AHA_3492 from Aeromonas hydrophila subsp. hydrophila (strain ATCC 7966 / DSM 30187 / BCRC 13018 / CCUG 14551 / JCM 1027 / KCTC 2358 / NCIMB 9240 / NCTC 8049).